A 191-amino-acid polypeptide reads, in one-letter code: 3-isopropylmalate dehydratase small subunit (191 aa).

It belongs to the LeuD family. LeuD type 1 subfamily. In terms of assembly, heterodimer of LeuC and LeuD.

It catalyses the reaction (2R,3S)-3-isopropylmalate = (2S)-2-isopropylmalate. The protein operates within amino-acid biosynthesis; L-leucine biosynthesis; L-leucine from 3-methyl-2-oxobutanoate: step 2/4. In terms of biological role, catalyzes the isomerization between 2-isopropylmalate and 3-isopropylmalate, via the formation of 2-isopropylmaleate. The protein is 3-isopropylmalate dehydratase small subunit of Anaeromyxobacter dehalogenans (strain 2CP-1 / ATCC BAA-258).